Consider the following 430-residue polypeptide: Formate-dependent phosphoribosylglycinamide formyltransferase (430 aa).

N(1)-(5-phospho-beta-D-ribosyl)glycinamide-binding positions include 26–27 (EL) and Glu-86. ATP contacts are provided by residues Arg-118, Lys-159, 199–202 (EEHI), and Glu-207. An ATP-grasp domain is found at 123-319 (ETLVKEAKVP…EFALHLRAVL (197 aa)). Mg(2+) contacts are provided by Glu-276 and Glu-288. N(1)-(5-phospho-beta-D-ribosyl)glycinamide is bound by residues Asp-295, Lys-375, and 382-383 (RR).

This sequence belongs to the PurK/PurT family. In terms of assembly, homodimer.

It catalyses the reaction N(1)-(5-phospho-beta-D-ribosyl)glycinamide + formate + ATP = N(2)-formyl-N(1)-(5-phospho-beta-D-ribosyl)glycinamide + ADP + phosphate + H(+). It participates in purine metabolism; IMP biosynthesis via de novo pathway; N(2)-formyl-N(1)-(5-phospho-D-ribosyl)glycinamide from N(1)-(5-phospho-D-ribosyl)glycinamide (formate route): step 1/1. Functionally, involved in the de novo purine biosynthesis. Catalyzes the transfer of formate to 5-phospho-ribosyl-glycinamide (GAR), producing 5-phospho-ribosyl-N-formylglycinamide (FGAR). Formate is provided by PurU via hydrolysis of 10-formyl-tetrahydrofolate. In Pyrococcus horikoshii (strain ATCC 700860 / DSM 12428 / JCM 9974 / NBRC 100139 / OT-3), this protein is Formate-dependent phosphoribosylglycinamide formyltransferase.